The following is a 154-amino-acid chain: Myoglobin (154 aa).

Residues 2-148 (GLSDGEWQLV…FRNDMAAKYK (147 aa)) form the Globin domain. Ser-4 is subject to Phosphoserine. His-65 lines the nitrite pocket. His-65 lines the O2 pocket. Phosphothreonine is present on Thr-68. A heme b-binding site is contributed by His-94.

This sequence belongs to the globin family. As to quaternary structure, monomeric.

It is found in the cytoplasm. The protein localises to the sarcoplasm. The catalysed reaction is Fe(III)-heme b-[protein] + nitric oxide + H2O = Fe(II)-heme b-[protein] + nitrite + 2 H(+). The enzyme catalyses H2O2 + AH2 = A + 2 H2O. Its function is as follows. Monomeric heme protein which primary function is to store oxygen and facilitate its diffusion within muscle tissues. Reversibly binds oxygen through a pentacoordinated heme iron and enables its timely and efficient release as needed during periods of heightened demand. Depending on the oxidative conditions of tissues and cells, and in addition to its ability to bind oxygen, it also has a nitrite reductase activity whereby it regulates the production of bioactive nitric oxide. Under stress conditions, like hypoxia and anoxia, it also protects cells against reactive oxygen species thanks to its pseudoperoxidase activity. The chain is Myoglobin (MB) from Didelphis virginiana (North American opossum).